The chain runs to 493 residues: Glutamate--tRNA ligase (493 aa).

The 'HIGH' region signature appears at 10 to 20; it reads PSPTGDPHVGT. Residues 251–255 carry the 'KMSKS' region motif; that stretch reads KLSKR. K254 provides a ligand contact to ATP.

It belongs to the class-I aminoacyl-tRNA synthetase family. Glutamate--tRNA ligase type 1 subfamily. Monomer.

The protein resides in the cytoplasm. The enzyme catalyses tRNA(Glu) + L-glutamate + ATP = L-glutamyl-tRNA(Glu) + AMP + diphosphate. In terms of biological role, catalyzes the attachment of glutamate to tRNA(Glu) in a two-step reaction: glutamate is first activated by ATP to form Glu-AMP and then transferred to the acceptor end of tRNA(Glu). The polypeptide is Glutamate--tRNA ligase (Pseudomonas putida (strain ATCC 700007 / DSM 6899 / JCM 31910 / BCRC 17059 / LMG 24140 / F1)).